A 341-amino-acid polypeptide reads, in one-letter code: Methionine import ATP-binding protein MetN 1 (341 aa).

Residues 2 to 241 form the ABC transporter domain; it reads IEFRQVSKTF…PKTTIAQNFV (240 aa). Residue 38–45 participates in ATP binding; it reads GYSGAGKS.

This sequence belongs to the ABC transporter superfamily. Methionine importer (TC 3.A.1.24) family. The complex is composed of two ATP-binding proteins (MetN), two transmembrane proteins (MetI) and a solute-binding protein (MetQ).

The protein localises to the cell membrane. It carries out the reaction L-methionine(out) + ATP + H2O = L-methionine(in) + ADP + phosphate + H(+). It catalyses the reaction D-methionine(out) + ATP + H2O = D-methionine(in) + ADP + phosphate + H(+). Functionally, part of the ABC transporter complex MetNIQ involved in methionine import. Responsible for energy coupling to the transport system. This chain is Methionine import ATP-binding protein MetN 1, found in Staphylococcus aureus (strain USA300).